The sequence spans 303 residues: Nucleotide-binding protein SAR0820 (303 aa).

Residue G18–S25 coordinates ATP. D69–G72 provides a ligand contact to GTP.

It belongs to the RapZ-like family.

Its function is as follows. Displays ATPase and GTPase activities. In Staphylococcus aureus (strain MRSA252), this protein is Nucleotide-binding protein SAR0820.